Here is a 427-residue protein sequence, read N- to C-terminus: Histidinol dehydrogenase (427 aa).

Substrate contacts are provided by serine 232, glutamine 254, and histidine 257. The Zn(2+) site is built by glutamine 254 and histidine 257. Residues glutamate 322 and histidine 323 each act as proton acceptor in the active site. 4 residues coordinate substrate: histidine 323, aspartate 356, glutamate 410, and histidine 415. Residue aspartate 356 participates in Zn(2+) binding. Histidine 415 lines the Zn(2+) pocket.

It belongs to the histidinol dehydrogenase family. Requires Zn(2+) as cofactor.

It carries out the reaction L-histidinol + 2 NAD(+) + H2O = L-histidine + 2 NADH + 3 H(+). The protein operates within amino-acid biosynthesis; L-histidine biosynthesis; L-histidine from 5-phospho-alpha-D-ribose 1-diphosphate: step 9/9. In terms of biological role, catalyzes the sequential NAD-dependent oxidations of L-histidinol to L-histidinaldehyde and then to L-histidine. The protein is Histidinol dehydrogenase of Listeria innocua serovar 6a (strain ATCC BAA-680 / CLIP 11262).